The chain runs to 261 residues: Large ribosomal subunit protein uL3 (261 aa).

Over residues 138 to 148 (SVSHRSHGSTG) the composition is skewed to low complexity. 2 disordered regions span residues 138–163 (SVSHRSHGSTGQRQDPGRTFPGKKMA) and 214–261 (ADAP…GDQA). Gln151 bears the N5-methylglutamine mark. A compositionally biased stretch (low complexity) spans 227–261 (APTPVEAAADEAAPAEEPAVTEAPAAEATEAGDQA).

Belongs to the universal ribosomal protein uL3 family. As to quaternary structure, part of the 50S ribosomal subunit. Forms a cluster with proteins L14 and L19. Post-translationally, methylated by PrmB.

In terms of biological role, one of the primary rRNA binding proteins, it binds directly near the 3'-end of the 23S rRNA, where it nucleates assembly of the 50S subunit. This Phenylobacterium zucineum (strain HLK1) protein is Large ribosomal subunit protein uL3.